We begin with the raw amino-acid sequence, 125 residues long: Mite group 2 allergen Gly d 2.02 (125 aa).

This sequence belongs to the NPC2 family.

It localises to the secreted. In Glycyphagus domesticus (House itch mite), this protein is Mite group 2 allergen Gly d 2.02.